Consider the following 512-residue polypeptide: MVLDLDLFRVDKGGDPALIRETQEKRFKDPGLVDQLVKADSEWRRCRFRADNLNKLKNLCSKTIGEKMKKKEPVGEDESIPEDVLNFDDLTADTLAALKVSQIKKVRLLVDEAIQKCDGERVKLEAERFENLREIGNLLHPSVPISNDEDADNKVERIWGDCTVRKKYSHVDLVVMVDGFEGEKGAVVAGSRGYFLKGVLVFLEQALIQYALRTLGSRGYTPIYTPFFMRKEVMQEVAQLSQFDEELYKVIGKGSEKSDDSSYDEKYLIATSEQPIAALHRDEWLRPEDLPIKYAGFSTCFRQEVGSHGRDTRGIFRVHQFEKIEQFVYSSPHDNKSWEMFDEMITTAEEFYQSLGIPYHIVNIVSGSLNHAASKKLDLEAWFPGSGAFRELVSCSNCTDYQARRLRIRYGQTKKMMDKVEFVHMLNATMCATTRTICAILENYQTEKGIVVPEKLREFMPPGLQELIPFVKPAPIDQEPSKKQKKQHEGSKKKAKEVTLENQLQNMEVTEA.

The residue at position 1 (methionine 1) is an N-acetylmethionine. The interaction with tRNA stretch occupies residues 9-61 (RVDKGGDPALIRETQEKRFKDPGLVDQLVKADSEWRRCRFRADNLNKLKNLCS). The residue at position 241 (serine 241) is a Phosphoserine. 2 residues coordinate L-serine: threonine 271 and arginine 302. Residues 302–304 (RQE) and 318–321 (VHQF) each bind ATP. Lysine 323 carries the post-translational modification N6-acetyllysine. An L-serine-binding site is contributed by glutamate 325. 391-394 (ELVS) contacts ATP. An L-serine-binding site is contributed by asparagine 427. Residues 472-512 (KPAPIDQEPSKKQKKQHEGSKKKAKEVTLENQLQNMEVTEA) are disordered. Over residues 479-499 (EPSKKQKKQHEGSKKKAKEVT) the composition is skewed to basic and acidic residues. The Nuclear localization signal motif lies at 482–494 (KKQKKQHEGSKKK). Residues 500–512 (LENQLQNMEVTEA) show a composition bias toward polar residues.

It belongs to the class-II aminoacyl-tRNA synthetase family. Type-1 seryl-tRNA synthetase subfamily. As to quaternary structure, homodimer. The tRNA molecule may bind across the dimer. Interacts with SIRT2. Interacts with METTL6; interaction is required for the tRNA N(3)-methylcytidine methyltransferase activity of METTL6.

Its subcellular location is the cytoplasm. It localises to the nucleus. It carries out the reaction tRNA(Ser) + L-serine + ATP = L-seryl-tRNA(Ser) + AMP + diphosphate + H(+). The enzyme catalyses tRNA(Sec) + L-serine + ATP = L-seryl-tRNA(Sec) + AMP + diphosphate + H(+). It participates in aminoacyl-tRNA biosynthesis; selenocysteinyl-tRNA(Sec) biosynthesis; L-seryl-tRNA(Sec) from L-serine and tRNA(Sec): step 1/1. In terms of biological role, catalyzes the attachment of serine to tRNA(Ser) in a two-step reaction: serine is first activated by ATP to form Ser-AMP and then transferred to the acceptor end of tRNA(Ser). Is probably also able to aminoacylate tRNA(Sec) with serine, to form the misacylated tRNA L-seryl-tRNA(Sec), which will be further converted into selenocysteinyl-tRNA(Sec). In the nucleus, binds to the VEGFA core promoter and prevents MYC binding and transcriptional activation by MYC. Recruits SIRT2 to the VEGFA promoter, promoting deacetylation of histone H4 at 'Lys-16' (H4K16). Thereby, inhibits the production of VEGFA and sprouting angiogenesis mediated by VEGFA. The protein is Serine--tRNA ligase, cytoplasmic (Sars1) of Rattus norvegicus (Rat).